A 120-amino-acid chain; its full sequence is Large ribosomal subunit protein bL17 (120 aa).

It belongs to the bacterial ribosomal protein bL17 family. In terms of assembly, part of the 50S ribosomal subunit. Contacts protein L32.

This is Large ribosomal subunit protein bL17 from Mesomycoplasma hyopneumoniae (strain 232) (Mycoplasma hyopneumoniae).